The chain runs to 360 residues: Uroporphyrinogen decarboxylase (360 aa).

Substrate-binding positions include 31–35 (RQAGR), D81, Y157, T212, and H333.

This sequence belongs to the uroporphyrinogen decarboxylase family. In terms of assembly, homodimer.

Its subcellular location is the cytoplasm. It carries out the reaction uroporphyrinogen III + 4 H(+) = coproporphyrinogen III + 4 CO2. The protein operates within porphyrin-containing compound metabolism; protoporphyrin-IX biosynthesis; coproporphyrinogen-III from 5-aminolevulinate: step 4/4. Its function is as follows. Catalyzes the decarboxylation of four acetate groups of uroporphyrinogen-III to yield coproporphyrinogen-III. This Janthinobacterium sp. (strain Marseille) (Minibacterium massiliensis) protein is Uroporphyrinogen decarboxylase.